We begin with the raw amino-acid sequence, 611 residues long: Oxidoreductase cicC (611 aa).

An N-terminal signal peptide occupies residues 1–20 (MALRYLNKFSLLSLAVPTLA). Residues 45 to 46 (NA) and 65 to 66 (EA) each bind FAD. N-linked (GlcNAc...) asparagine glycans are attached at residues Asn-76 and Asn-113. FAD contacts are provided by residues Val-123 and 131–134 (NLMT). Asn-282, Asn-410, and Asn-475 each carry an N-linked (GlcNAc...) asparagine glycan. His-547 (proton acceptor) is an active-site residue. His-547 (proton donor) is an active-site residue. Ala-581 provides a ligand contact to FAD. Residue His-591 is the Proton acceptor of the active site. 592 to 593 (PI) serves as a coordination point for FAD.

The protein belongs to the GMC oxidoreductase family. FAD serves as cofactor.

It participates in phytotoxin biosynthesis. Functionally, oxidoreductase; part of the gene cluster that mediates the biosynthesis of cichorine, a phytotoxin active against knapweed, corn, and soybeans. The first step in the pathway is performed by the non-reducing polyketide synthase pkbA that condenses one acetyl-CoA starter unit with 3 malonyl-CoA units. PkbA also catalyzes one methylation step to produce 3-methylorsellinate. The nonribosomal peptide synthase-like protein cicB, the cytochrome P450 monooxygenase cicH and the O-methyltransferase cicE are involved in the conversion of 3-methylorsellinate into nidulol. CicB converts 3-methylorsellinate to a yet unidentified intermediate, cicH may play a ring-closing role for cichorine and cicE is plausibly responsible for the methylation of one of the phenol groups. The oxidoreductase cicC acts downstream with still unidentified enzymes to further convert nidulol into cichorine. The sequence is that of Oxidoreductase cicC from Emericella nidulans (strain FGSC A4 / ATCC 38163 / CBS 112.46 / NRRL 194 / M139) (Aspergillus nidulans).